The chain runs to 158 residues: Cysteine proteinase inhibitor 4 (158 aa).

The N-terminal stretch at 1-24 (MAARCPVGVASVLLLIVLVTVASA) is a signal peptide. The disordered stretch occupies residues 26-51 (SGARSGGGGGGGIRELRGGGAGRRVG). The segment covering 29–49 (RSGGGGGGGIRELRGGGAGRR) has biased composition (gly residues). The region spanning 51 to 116 (GGRTEVRDVE…KYYLRVAAAE (66 aa)) is the Cystatin domain. A Secondary area of contact motif is present at residues 101–105 (QVVSG).

This sequence belongs to the cystatin family. Phytocystatin subfamily.

The protein resides in the secreted. Functionally, specific inhibitor of cysteine proteinases. Probably involved in the regulation of endogenous processes and in defense against pests and pathogens. This Oryza sativa subsp. japonica (Rice) protein is Cysteine proteinase inhibitor 4.